Consider the following 445-residue polypeptide: Glucose-6-phosphate isomerase (445 aa).

Glutamate 287 (proton donor) is an active-site residue. Active-site residues include histidine 308 and lysine 422.

This sequence belongs to the GPI family.

The protein resides in the cytoplasm. The enzyme catalyses alpha-D-glucose 6-phosphate = beta-D-fructose 6-phosphate. It participates in carbohydrate biosynthesis; gluconeogenesis. Its pathway is carbohydrate degradation; glycolysis; D-glyceraldehyde 3-phosphate and glycerone phosphate from D-glucose: step 2/4. Its function is as follows. Catalyzes the reversible isomerization of glucose-6-phosphate to fructose-6-phosphate. In Bacteroides fragilis (strain ATCC 25285 / DSM 2151 / CCUG 4856 / JCM 11019 / LMG 10263 / NCTC 9343 / Onslow / VPI 2553 / EN-2), this protein is Glucose-6-phosphate isomerase.